Consider the following 177-residue polypeptide: ATP synthase subunit delta (177 aa).

Belongs to the ATPase delta chain family. F-type ATPases have 2 components, F(1) - the catalytic core - and F(0) - the membrane proton channel. F(1) has five subunits: alpha(3), beta(3), gamma(1), delta(1), epsilon(1). F(0) has three main subunits: a(1), b(2) and c(10-14). The alpha and beta chains form an alternating ring which encloses part of the gamma chain. F(1) is attached to F(0) by a central stalk formed by the gamma and epsilon chains, while a peripheral stalk is formed by the delta and b chains.

Its subcellular location is the cell inner membrane. Its function is as follows. F(1)F(0) ATP synthase produces ATP from ADP in the presence of a proton or sodium gradient. F-type ATPases consist of two structural domains, F(1) containing the extramembraneous catalytic core and F(0) containing the membrane proton channel, linked together by a central stalk and a peripheral stalk. During catalysis, ATP synthesis in the catalytic domain of F(1) is coupled via a rotary mechanism of the central stalk subunits to proton translocation. This protein is part of the stalk that links CF(0) to CF(1). It either transmits conformational changes from CF(0) to CF(1) or is implicated in proton conduction. This is ATP synthase subunit delta from Glaesserella parasuis serovar 5 (strain SH0165) (Haemophilus parasuis).